A 349-amino-acid polypeptide reads, in one-letter code: Phenylalanine--tRNA ligase alpha subunit (349 aa).

E264 contributes to the Mg(2+) binding site.

The protein belongs to the class-II aminoacyl-tRNA synthetase family. Phe-tRNA synthetase alpha subunit type 1 subfamily. As to quaternary structure, tetramer of two alpha and two beta subunits. Mg(2+) serves as cofactor.

The protein localises to the cytoplasm. It carries out the reaction tRNA(Phe) + L-phenylalanine + ATP = L-phenylalanyl-tRNA(Phe) + AMP + diphosphate + H(+). The sequence is that of Phenylalanine--tRNA ligase alpha subunit from Myxococcus xanthus (strain DK1622).